Here is a 532-residue protein sequence, read N- to C-terminus: Monolignol oxidoreductase AtBBE-like 15 (532 aa).

The first 27 residues, Met-1–Ser-27, serve as a signal peptide directing secretion. Residues Cys-36 and Cys-100 are joined by a disulfide bond. Asn-57 carries N-linked (GlcNAc...) asparagine glycosylation. Residues Thr-76–Val-254 enclose the FAD-binding PCMH-type domain. A cross-link (6-(S-cysteinyl)-8alpha-(pros-histidyl)-FAD (His-Cys)) is located at residues His-115–Cys-179. Residues Asn-306 and Asn-431 are each glycosylated (N-linked (GlcNAc...) asparagine).

Belongs to the oxygen-dependent FAD-linked oxidoreductase family. The cofactor is FAD. In terms of processing, the FAD cofactor is bound via a bicovalent 6-S-cysteinyl, 8alpha-N1-histidyl FAD linkage. As to expression, expressed in sepals and stamen.

It is found in the secreted. The protein localises to the cell wall. It catalyses the reaction (E)-4-coumaroyl alcohol + A = (E)-4-coumaraldehyde + AH2. The catalysed reaction is (E)-coniferol + A = (E)-coniferaldehyde + AH2. It carries out the reaction (E)-sinapyl alcohol + A = (E)-sinapaldehyde + AH2. The enzyme catalyses 4-O-(beta-D-glucosyl)-(E)-coniferol + A = 4-O-(beta-D-glucosyl)-4-(E)-coniferyl aldehyde + AH2. Functionally, required for endosperm development and polar nuclei fusion. Mediates oxidation of p-hydroxylated derivatives of cinnamyl alcohol (i.e. the monolignols p-coumaryl-, coniferyl-, and sinapyl alcohol) to their corresponding aldehydes. Can also use the beta-O-glycosylated form of coniferyl alcohol (coniferin) as substrate, but is much less efficient towards cinnamyl alcohol. The electron acceptor required for these reactions is not known, but does not seem to be dioxygen. This Arabidopsis thaliana (Mouse-ear cress) protein is Monolignol oxidoreductase AtBBE-like 15.